A 516-amino-acid polypeptide reads, in one-letter code: Replication factor C large subunit (516 aa).

44–51 is an ATP binding site; that stretch reads GAPGVGKT. Residues 421–516 form a disordered region; it reads RSEAVEAHAG…DGQAGLSEFM (96 aa). Positions 454-467 are enriched in basic and acidic residues; sequence VQSHKSAESGDDTV. Over residues 479–496 the composition is skewed to low complexity; that stretch reads QSGASETASATESASDSD. The segment covering 497–508 has biased composition (acidic residues); that stretch reads ASTDTDADDDDG.

The protein belongs to the activator 1 small subunits family. RfcL subfamily. As to quaternary structure, heteromultimer composed of small subunits (RfcS) and large subunits (RfcL).

Functionally, part of the RFC clamp loader complex which loads the PCNA sliding clamp onto DNA. In Haloquadratum walsbyi (strain DSM 16790 / HBSQ001), this protein is Replication factor C large subunit.